Here is a 599-residue protein sequence, read N- to C-terminus: Sulfite reductase [NADPH] flavoprotein alpha-component (599 aa).

The Flavodoxin-like domain occupies 64-202; the sequence is ITIISASQTG…AASEWRARVV (139 aa). FMN contacts are provided by residues 70–75, 117–120, and 153–162; these read SQTGNA, STQG, and LGDSSYEFFC. The FAD-binding FR-type domain occupies 234–448; that stretch reads DAPLVASLSV…IEHNDNFRLP (215 aa). Residues threonine 322, alanine 356, 386-389, 404-406, tyrosine 410, and 419-422 each bind FAD; these read RLYS, TVG, and GGAS. NADP(+)-binding positions include 519-520, 525-529, and aspartate 561; these read SR and KVYVQ. An FAD-binding site is contributed by tyrosine 599.

Belongs to the NADPH-dependent sulphite reductase flavoprotein subunit CysJ family. It in the N-terminal section; belongs to the flavodoxin family. This sequence in the C-terminal section; belongs to the flavoprotein pyridine nucleotide cytochrome reductase family. In terms of assembly, alpha(8)-beta(8). The alpha component is a flavoprotein, the beta component is a hemoprotein. FAD is required as a cofactor. Requires FMN as cofactor.

It carries out the reaction hydrogen sulfide + 3 NADP(+) + 3 H2O = sulfite + 3 NADPH + 4 H(+). It participates in sulfur metabolism; hydrogen sulfide biosynthesis; hydrogen sulfide from sulfite (NADPH route): step 1/1. Functionally, component of the sulfite reductase complex that catalyzes the 6-electron reduction of sulfite to sulfide. This is one of several activities required for the biosynthesis of L-cysteine from sulfate. The flavoprotein component catalyzes the electron flow from NADPH -&gt; FAD -&gt; FMN to the hemoprotein component. The protein is Sulfite reductase [NADPH] flavoprotein alpha-component of Shigella boydii serotype 4 (strain Sb227).